The chain runs to 282 residues: Acetylglutamate kinase (282 aa).

Substrate-binding positions include 62-63 (GG), Arg-84, and Asn-178.

The protein belongs to the acetylglutamate kinase family. ArgB subfamily.

It localises to the cytoplasm. The enzyme catalyses N-acetyl-L-glutamate + ATP = N-acetyl-L-glutamyl 5-phosphate + ADP. The protein operates within amino-acid biosynthesis; L-arginine biosynthesis; N(2)-acetyl-L-ornithine from L-glutamate: step 2/4. Catalyzes the ATP-dependent phosphorylation of N-acetyl-L-glutamate. This Thermotoga sp. (strain RQ2) protein is Acetylglutamate kinase.